The chain runs to 293 residues: Glutamyl-Q tRNA(Asp) synthetase (293 aa).

Residues 4–8 and E40 each bind L-glutamate; that span reads RYAPS. Positions 7–17 match the 'HIGH' region motif; it reads PSPSGDLHFGN. The Zn(2+) site is built by C92, C94, Y113, and C117. Y180 and R198 together coordinate L-glutamate. The 'KMSKS' region signature appears at 236–240; it reads RLAKR. K239 contributes to the ATP binding site.

This sequence belongs to the class-I aminoacyl-tRNA synthetase family. GluQ subfamily. Zn(2+) is required as a cofactor.

Its function is as follows. Catalyzes the tRNA-independent activation of glutamate in presence of ATP and the subsequent transfer of glutamate onto a tRNA(Asp). Glutamate is transferred on the 2-amino-5-(4,5-dihydroxy-2-cyclopenten-1-yl) moiety of the queuosine in the wobble position of the QUC anticodon. In Corynebacterium glutamicum (strain ATCC 13032 / DSM 20300 / JCM 1318 / BCRC 11384 / CCUG 27702 / LMG 3730 / NBRC 12168 / NCIMB 10025 / NRRL B-2784 / 534), this protein is Glutamyl-Q tRNA(Asp) synthetase.